A 371-amino-acid polypeptide reads, in one-letter code: Bifunctional enzyme IspD/IspF (371 aa).

The tract at residues 1–212 (MLDISLIMLG…CLIPPSNEHF (212 aa)) is 2-C-methyl-D-erythritol 4-phosphate cytidylyltransferase. The tract at residues 212–371 (FTGIGFDAHE…ANLKYYDWTK (160 aa)) is 2-C-methyl-D-erythritol 2,4-cyclodiphosphate synthase. 2 residues coordinate a divalent metal cation: Asp218 and His220. 4-CDP-2-C-methyl-D-erythritol 2-phosphate is bound by residues 218–220 (DAH) and 244–245 (HS). An a divalent metal cation-binding site is contributed by His252. Residues 266 to 268 (DIG), 271 to 275 (FPDTD), 342 to 345 (TTTE), Phe349, and Arg352 each bind 4-CDP-2-C-methyl-D-erythritol 2-phosphate.

The protein in the N-terminal section; belongs to the IspD/TarI cytidylyltransferase family. IspD subfamily. It in the C-terminal section; belongs to the IspF family. The cofactor is a divalent metal cation.

The enzyme catalyses 2-C-methyl-D-erythritol 4-phosphate + CTP + H(+) = 4-CDP-2-C-methyl-D-erythritol + diphosphate. The catalysed reaction is 4-CDP-2-C-methyl-D-erythritol 2-phosphate = 2-C-methyl-D-erythritol 2,4-cyclic diphosphate + CMP. The protein operates within isoprenoid biosynthesis; isopentenyl diphosphate biosynthesis via DXP pathway; isopentenyl diphosphate from 1-deoxy-D-xylulose 5-phosphate: step 2/6. Its pathway is isoprenoid biosynthesis; isopentenyl diphosphate biosynthesis via DXP pathway; isopentenyl diphosphate from 1-deoxy-D-xylulose 5-phosphate: step 4/6. In terms of biological role, bifunctional enzyme that catalyzes the formation of 4-diphosphocytidyl-2-C-methyl-D-erythritol from CTP and 2-C-methyl-D-erythritol 4-phosphate (MEP) (IspD), and catalyzes the conversion of 4-diphosphocytidyl-2-C-methyl-D-erythritol 2-phosphate (CDP-ME2P) to 2-C-methyl-D-erythritol 2,4-cyclodiphosphate (ME-CPP) with a corresponding release of cytidine 5-monophosphate (CMP) (IspF). The chain is Bifunctional enzyme IspD/IspF from Campylobacter curvus (strain 525.92).